The following is a 332-amino-acid chain: Thiosulfate-binding protein (332 aa).

Residues 1 to 22 form the signal peptide; sequence MKRLFSASLLAAGLALGGAAHA.

It belongs to the prokaryotic sulfate-binding protein family.

It is found in the periplasm. Binds thiosulfate specifically and with high affinity. Has no detectable affinity for sulfate. This Pseudomonas aeruginosa (strain ATCC 15692 / DSM 22644 / CIP 104116 / JCM 14847 / LMG 12228 / 1C / PRS 101 / PAO1) protein is Thiosulfate-binding protein.